The primary structure comprises 141 residues: Hemoglobin subunit alpha (141 aa).

The Globin domain maps to 1-141 (VLSPADKTNV…VSTVLTSKYR (141 aa)). S3 is modified (phosphoserine). N6-succinyllysine is present on K7. Position 8 is a phosphothreonine (T8). The residue at position 11 (K11) is an N6-succinyllysine. Residue K16 is modified to N6-acetyllysine; alternate. At K16 the chain carries N6-succinyllysine; alternate. Y24 is subject to Phosphotyrosine. A Phosphoserine modification is found at S35. N6-succinyllysine is present on K40. Position 49 is a phosphoserine (S49). H58 contacts O2. H87 serves as a coordination point for heme b. S102 carries the post-translational modification Phosphoserine. Position 108 is a phosphothreonine (T108). Residues S124 and S131 each carry the phosphoserine modification. Phosphothreonine occurs at positions 134 and 137. Residue S138 is modified to Phosphoserine.

Belongs to the globin family. Heterotetramer of two alpha chains and two beta chains. In terms of tissue distribution, red blood cells.

Its function is as follows. Involved in oxygen transport from the lung to the various peripheral tissues. In terms of biological role, hemopressin acts as an antagonist peptide of the cannabinoid receptor CNR1. Hemopressin-binding efficiently blocks cannabinoid receptor CNR1 and subsequent signaling. The sequence is that of Hemoglobin subunit alpha (HBA) from Semnopithecus entellus (Northern plains gray langur).